The chain runs to 1171 residues: ATP-dependent helicase/deoxyribonuclease subunit B (1171 aa).

The UvrD-like helicase ATP-binding domain maps to 1–343 (MSLRFVIGRA…LVAEENYRYR (343 aa)). 8–15 (GRAGSGKS) provides a ligand contact to ATP. The region spanning 281–587 (MEQPRFHSPA…QFANIPPSLD (307 aa)) is the UvrD-like helicase C-terminal domain. Residues cysteine 805, cysteine 1129, cysteine 1132, and cysteine 1138 each coordinate [4Fe-4S] cluster.

This sequence belongs to the helicase family. AddB/RexB type 1 subfamily. In terms of assembly, heterodimer of AddA and AddB. Mg(2+) is required as a cofactor. The cofactor is [4Fe-4S] cluster.

In terms of biological role, the heterodimer acts as both an ATP-dependent DNA helicase and an ATP-dependent, dual-direction single-stranded exonuclease. Recognizes the chi site generating a DNA molecule suitable for the initiation of homologous recombination. The AddB subunit has 5' -&gt; 3' nuclease activity but not helicase activity. This is ATP-dependent helicase/deoxyribonuclease subunit B from Bacillus thuringiensis (strain Al Hakam).